The chain runs to 143 residues: Transcriptional regulator MraZ (143 aa).

SpoVT-AbrB domains follow at residues 5–47 (EYRH…PQSE) and 76–119 (ASEC…SKTL).

Belongs to the MraZ family. Forms oligomers.

Its subcellular location is the cytoplasm. It localises to the nucleoid. In Shouchella clausii (strain KSM-K16) (Alkalihalobacillus clausii), this protein is Transcriptional regulator MraZ.